Here is a 1091-residue protein sequence, read N- to C-terminus: ATP-dependent helicase/deoxyribonuclease subunit B (1091 aa).

The protein belongs to the helicase family. AddB/RexB type 2 subfamily. As to quaternary structure, heterodimer of AddA and RexB. It depends on Mg(2+) as a cofactor.

Its function is as follows. The heterodimer acts as both an ATP-dependent DNA helicase and an ATP-dependent, dual-direction single-stranded exonuclease. Recognizes the chi site generating a DNA molecule suitable for the initiation of homologous recombination. This subunit has 5' -&gt; 3' nuclease activity but not helicase activity. This Streptococcus pneumoniae (strain ATCC 700669 / Spain 23F-1) protein is ATP-dependent helicase/deoxyribonuclease subunit B.